The primary structure comprises 793 residues: Sucrose synthase (793 aa).

The tract at residues Met-263–Thr-742 is GT-B glycosyltransferase.

This sequence belongs to the glycosyltransferase 1 family. In terms of assembly, homotetramer.

It catalyses the reaction an NDP-alpha-D-glucose + D-fructose = a ribonucleoside 5'-diphosphate + sucrose + H(+). The enzyme catalyses ADP-alpha-D-glucose + D-fructose = sucrose + ADP + H(+). Its function is as follows. Catalyzes the reversible conversion of sucrose and a nucleotide disphosphate (NDP) into fructose and NDP-glucose; although the reaction is freely reversible in vitro, the physiological reaction seems to be sucrose cleavage. Unlike characterized plant enzymes prefers ADP as a cosubstrate, whereas plants prefer UDP. The KM for sucrose is 45-fold lower in the presence of ADP than UDP. Its preference for ADP over UDP suggests it may directly link sucrose and glycogen metabolism. This chain is Sucrose synthase, found in Acidithiobacillus caldus (strain ATCC 51756 / DSM 8584 / KU).